Reading from the N-terminus, the 386-residue chain is Transcription factor GTE1 (386 aa).

Disordered regions lie at residues G66–S106 and A340–A386. The span at A68–G78 shows a compositional bias: polar residues. A Bromo domain is found at V105–I211. The NET domain occupies R263 to S344. Positions G345–G358 are enriched in low complexity.

As to expression, barely detectable in stems, leaves, siliques, and dry seeds, but was present at considerable levels in roots, flowers and imbibited seeds.

The protein localises to the nucleus. In terms of biological role, transcription activator that plays a role in the promotion of seed germination by both negatively and positively regulating the abscisic acid (ABA) and phytochrome A (phyA) transduction pathways, respectively. The polypeptide is Transcription factor GTE1 (GTE1) (Arabidopsis thaliana (Mouse-ear cress)).